The sequence spans 345 residues: UDP-3-O-acylglucosamine N-acyltransferase (345 aa).

Catalysis depends on His241, which acts as the Proton acceptor.

Belongs to the transferase hexapeptide repeat family. LpxD subfamily. In terms of assembly, homotrimer.

It catalyses the reaction a UDP-3-O-[(3R)-3-hydroxyacyl]-alpha-D-glucosamine + a (3R)-hydroxyacyl-[ACP] = a UDP-2-N,3-O-bis[(3R)-3-hydroxyacyl]-alpha-D-glucosamine + holo-[ACP] + H(+). Its pathway is bacterial outer membrane biogenesis; LPS lipid A biosynthesis. Functionally, catalyzes the N-acylation of UDP-3-O-acylglucosamine using 3-hydroxyacyl-ACP as the acyl donor. Is involved in the biosynthesis of lipid A, a phosphorylated glycolipid that anchors the lipopolysaccharide to the outer membrane of the cell. This is UDP-3-O-acylglucosamine N-acyltransferase from Desulfotalea psychrophila (strain LSv54 / DSM 12343).